The chain runs to 20 residues: U27-ctenitoxin-Pn1a (20 aa).

The tract at residues 1 to 20 (LAKRADICQPGKTSQRACET) is disordered. A compositionally biased stretch (polar residues) spans 11 to 20 (GKTSQRACET).

In terms of processing, contains 4 disulfide bonds. Expressed by the venom gland.

The protein localises to the secreted. Its function is as follows. Has a vascular smooth muscle contracting activity. Causes short-lived contractions of both arterial and venous rabbit vessels. The chain is U27-ctenitoxin-Pn1a from Phoneutria nigriventer (Brazilian armed spider).